Reading from the N-terminus, the 384-residue chain is Eukaryotic translation initiation factor 3 subunit M (384 aa).

One can recognise a PCI domain in the interval 184–346 (ENRKAIEAMI…KKILITGAFP (163 aa)).

This sequence belongs to the eIF-3 subunit M family. In terms of assembly, component of the eukaryotic translation initiation factor 3 (eIF-3) complex.

Its subcellular location is the cytoplasm. Functionally, component of the eukaryotic translation initiation factor 3 (eIF-3) complex, which is involved in protein synthesis of a specialized repertoire of mRNAs and, together with other initiation factors, stimulates binding of mRNA and methionyl-tRNAi to the 40S ribosome. The eIF-3 complex specifically targets and initiates translation of a subset of mRNAs involved in cell proliferation. In Schistosoma japonicum (Blood fluke), this protein is Eukaryotic translation initiation factor 3 subunit M.